The chain runs to 83 residues: Hainantoxin-III 5 (83 aa).

An N-terminal signal peptide occupies residues M1–A21. The propeptide occupies S22–R48. 3 disulfide bridges follow: C50–C65, C57–C70, and C64–C77. Leucine amide is present on L81.

Belongs to the neurotoxin 10 (Hwtx-1) family. 15 (Hntx-3) subfamily. As to quaternary structure, monomer. In terms of tissue distribution, expressed by the venom gland.

The protein resides in the secreted. Its function is as follows. Selective antagonist of neuronal tetrodotoxin (TTX)-sensitive voltage-gated sodium channels (IC(50)=1270 nM on Nav1.1/SCN1A, 270 nM on Nav1.2/SCN2A, 491 nM on Nav1.3/SCN3A and 232 nM on Nav1.7/SCN9A). This toxin suppress Nav1.7 current amplitude without significantly altering the activation, inactivation, and repriming kinetics. Short extreme depolarizations partially activate the toxin-bound channel, indicating voltage-dependent inhibition of this toxin. This toxin increases the deactivation of the Nav1.7 current after extreme depolarizations. The toxin-Nav1.7 complex is gradually dissociated upon prolonged strong depolarizations in a voltage-dependent manner, and the unbound toxin rebinds to Nav1.7 after a long repolarization. Moreover, analysis of chimeric channels showed that the DIIS3-S4 linker is critical for toxin binding to Nav1.7. These data are consistent with this toxin interacting with Nav1.7 site 4 and trapping the domain II voltage sensor in the closed state. The protein is Hainantoxin-III 5 of Cyriopagopus hainanus (Chinese bird spider).